Reading from the N-terminus, the 187-residue chain is Elongation factor P (187 aa).

An N6-(3,6-diaminohexanoyl)-5-hydroxylysine modification is found at K33.

It belongs to the elongation factor P family. May be beta-lysylated on the epsilon-amino group of Lys-33 by the combined action of EpmA and EpmB, and then hydroxylated on the C5 position of the same residue by EpmC (if this protein is present). Lysylation is critical for the stimulatory effect of EF-P on peptide-bond formation. The lysylation moiety may extend toward the peptidyltransferase center and stabilize the terminal 3-CCA end of the tRNA. Hydroxylation of the C5 position on Lys-33 may allow additional potential stabilizing hydrogen-bond interactions with the P-tRNA.

The protein localises to the cytoplasm. Its pathway is protein biosynthesis; polypeptide chain elongation. Involved in peptide bond synthesis. Alleviates ribosome stalling that occurs when 3 or more consecutive Pro residues or the sequence PPG is present in a protein, possibly by augmenting the peptidyl transferase activity of the ribosome. Modification of Lys-33 is required for alleviation. The polypeptide is Elongation factor P (Blochmanniella floridana).